The following is a 616-amino-acid chain: Dihydroxy-acid dehydratase (616 aa).

Residue Asp-81 coordinates Mg(2+). Cys-122 is a binding site for [2Fe-2S] cluster. Mg(2+) is bound by residues Asp-123 and Lys-124. N6-carboxylysine is present on Lys-124. A [2Fe-2S] cluster-binding site is contributed by Cys-195. Glu-491 contributes to the Mg(2+) binding site. Ser-517 serves as the catalytic Proton acceptor.

Belongs to the IlvD/Edd family. As to quaternary structure, homodimer. It depends on [2Fe-2S] cluster as a cofactor. Mg(2+) serves as cofactor.

It catalyses the reaction (2R)-2,3-dihydroxy-3-methylbutanoate = 3-methyl-2-oxobutanoate + H2O. The enzyme catalyses (2R,3R)-2,3-dihydroxy-3-methylpentanoate = (S)-3-methyl-2-oxopentanoate + H2O. It functions in the pathway amino-acid biosynthesis; L-isoleucine biosynthesis; L-isoleucine from 2-oxobutanoate: step 3/4. It participates in amino-acid biosynthesis; L-valine biosynthesis; L-valine from pyruvate: step 3/4. Functionally, functions in the biosynthesis of branched-chain amino acids. Catalyzes the dehydration of (2R,3R)-2,3-dihydroxy-3-methylpentanoate (2,3-dihydroxy-3-methylvalerate) into 2-oxo-3-methylpentanoate (2-oxo-3-methylvalerate) and of (2R)-2,3-dihydroxy-3-methylbutanoate (2,3-dihydroxyisovalerate) into 2-oxo-3-methylbutanoate (2-oxoisovalerate), the penultimate precursor to L-isoleucine and L-valine, respectively. In Photorhabdus laumondii subsp. laumondii (strain DSM 15139 / CIP 105565 / TT01) (Photorhabdus luminescens subsp. laumondii), this protein is Dihydroxy-acid dehydratase.